We begin with the raw amino-acid sequence, 180 residues long: Large ribosomal subunit protein uL5 (180 aa).

The protein belongs to the universal ribosomal protein uL5 family. Part of the 50S ribosomal subunit; part of the 5S rRNA/L5/L18/L25 subcomplex. Contacts the 5S rRNA and the P site tRNA. Forms a bridge to the 30S subunit in the 70S ribosome.

Its function is as follows. This is one of the proteins that bind and probably mediate the attachment of the 5S RNA into the large ribosomal subunit, where it forms part of the central protuberance. In the 70S ribosome it contacts protein S13 of the 30S subunit (bridge B1b), connecting the 2 subunits; this bridge is implicated in subunit movement. Contacts the P site tRNA; the 5S rRNA and some of its associated proteins might help stabilize positioning of ribosome-bound tRNAs. This chain is Large ribosomal subunit protein uL5, found in Spiroplasma kunkelii.